An 89-amino-acid chain; its full sequence is Elongation factor 1-beta (89 aa).

Belongs to the EF-1-beta/EF-1-delta family.

Its function is as follows. Promotes the exchange of GDP for GTP in EF-1-alpha/GDP, thus allowing the regeneration of EF-1-alpha/GTP that could then be used to form the ternary complex EF-1-alpha/GTP/AAtRNA. The protein is Elongation factor 1-beta of Methanococcus maripaludis (strain DSM 14266 / JCM 13030 / NBRC 101832 / S2 / LL).